A 501-amino-acid chain; its full sequence is Ribonuclease Y (501 aa).

Residues 7–27 (LVVIALLGALTLLTAGHVLAL) traverse the membrane as a helical segment. Residues 190–256 (VVRAVPLPEE…RLTLEKLVAD (67 aa)) form the KH domain. One can recognise an HD domain in the interval 316 to 409 (VLAHLVESAH…TQAADAISGG (94 aa)).

This sequence belongs to the RNase Y family.

Its subcellular location is the cell membrane. Functionally, endoribonuclease that initiates mRNA decay. The protein is Ribonuclease Y of Thermobifida fusca (strain YX).